A 611-amino-acid chain; its full sequence is O-fucosyltransferase 8 (611 aa).

The disordered stretch occupies residues 1–29 (MGKQGSPRSPRPETIDKEEKFGRRSLDSL). Positions 10 to 26 (PRPETIDKEEKFGRRSL) are enriched in basic and acidic residues. Residues 78–98 (IVLMISVTGFIFCMDSIMVSI) traverse the membrane as a helical; Signal-anchor for type II membrane protein segment. 3 N-linked (GlcNAc...) asparagine glycosylation sites follow: Asn115, Asn216, and Asn270. 386-388 (HLR) is a binding site for substrate. An N-linked (GlcNAc...) asparagine glycan is attached at Asn506.

It belongs to the glycosyltransferase GT106 family.

It localises to the membrane. Its pathway is glycan metabolism. The chain is O-fucosyltransferase 8 from Arabidopsis thaliana (Mouse-ear cress).